The sequence spans 352 residues: Probable cytosolic iron-sulfur protein assembly protein CIAO1 homolog (352 aa).

7 WD repeats span residues 12–51, 58–97, 106–145, 151–190, 195–234, 245–284, and 303–352; these read ASNKRLWSLSWNHKGSVLISSGEDRVIKLWAKCNDQLWGS, AHKKSIRCVTWSPCGTYIASASFDGTVTIWKISEAHSAPE, GHTSEVKCVAWCPSGHLIATCGRDKSVWLWEFDDEEDVQC, PHSQDVKSVAWHPHGEVLVSTSYDNKINVYREELDDWTVF, GHDSTVWKAEFSPSGDILASCSDDLCVKLWSWEGVCGKSS, YHTRTIFDLNWSPDSQLLASCGSDNRLCIYKMPANGLTHI, and AHSE…EYEL.

The protein belongs to the WD repeat CIA1 family.

Its function is as follows. Essential component of the cytosolic iron-sulfur (Fe/S) protein assembly machinery. Required for the maturation of extramitochondrial Fe/S proteins. The sequence is that of Probable cytosolic iron-sulfur protein assembly protein CIAO1 homolog from Schistosoma japonicum (Blood fluke).